Here is a 979-residue protein sequence, read N- to C-terminus: METGSPGKRPVLPKRARLLVTAGMGMLALLLFGPRLVDIYVDWLWFGEVGFRSVWITVLLTRLAIVAAVALVVAGIVLAALLLAYRSRPFFVPDEPQRDPVAPLRSAVMRRPRLFGWGIAVTLGVVCGLIASFDWVKVQLFVHGGTFGIVDPEFGYDIGFFVFDLPFYRSVLNWLFVAVVLAFLASLLTHYLFGGLRLTTGRGMLTQAARVQLAVFAGAVVLLKAVAYWLDRYELLSSGRKEPTFTGAGYTDIHAELPAKLVLVAIAVLCAVSFFTAIFLRDLRIPAMAAALLVLSAILVGGLWPLLMEQFSVRPNAADVERPYIQRNIEATREAYRIGGDWVQYRSYPGIGTKQPRDVPVDVTTIAKVRLLDPHILSRTFTQQQQLKNFFSFAEILDIDRYRIDGELQDYIVGVRELSPKSLTGNQTDWINKHTVYTHGNGFVAAPANRVNAAARDAENISDSNSGYPIYAVSDIASLGSGRQVIPVEQPRVYYGEVIAQADPDYAIVGGAPGSAPREYDTDTSKYTYTGAGGVSIGNWFNRTVFATKVAQHKFLFSREIGSESKVLIHRDPKERVQRVAPWLTTDDNPYPVVVNGRIVWIVDAYTTLDTYPYAQRSSLEGPVTSPTGIVRQGKQVSYVRNSVKATVDAYDGTVTLFQFDRDDPVLRTWMRAFPGTVKSEDQIPDELRAHFRYPEDLFEVQRSLLAKYHVDEPREFFTTNAFWSVPSDPTNNANATQPPFYVLVGDQQSAQPSFRLASAMVGYNREFLSAYISAHSDPANYGKLTVLELPTDTLTQGPQQIQNSMISDTRVASERTLLERSNRIHYGNLLSLPIADGGVLYVEPLYTERISTSPSSSTFPQLSRVLVSVREPRTEGGVRVGYAPTLAESLDQVFGPGTGRVATARGGDAASAPPPGAGGPAPPQAVPPPRTTQPPAAPPRGPDVPPATVAELRETLADLRAVLDRLEKAIDAAETPGG.

Helical transmembrane passes span 19-39 (LVTA…LVDI), 63-83 (LAIV…ALLL), 114-134 (LFGW…ASFD), 174-194 (WLFV…YLFG), 211-231 (VQLA…YWLD), 260-280 (KLVL…AIFL), and 288-308 (MAAA…PLLM). Positions 898–948 (GTGRVATARGGDAASAPPPGAGGPAPPQAVPPPRTTQPPAAPPRGPDVPPA) are disordered. Positions 913 to 946 (APPPGAGGPAPPQAVPPPRTTQPPAAPPRGPDVP) are enriched in pro residues.

The protein belongs to the UPF0182 family.

It localises to the cell membrane. This is UPF0182 protein MRA_0066 from Mycobacterium tuberculosis (strain ATCC 25177 / H37Ra).